A 285-amino-acid chain; its full sequence is Foldase protein PrsA 2 (285 aa).

Positions 1-20 (MRGKHIFIITALISILMLAA) are cleaved as a signal peptide. C21 carries the N-palmitoyl cysteine lipid modification. C21 is lipidated: S-diacylglycerol cysteine. Residues 134 to 224 (KPEIKASHIL…NGYHIIKLTG (91 aa)) form the PpiC domain.

The protein belongs to the PrsA family.

It localises to the cell membrane. The catalysed reaction is [protein]-peptidylproline (omega=180) = [protein]-peptidylproline (omega=0). Functionally, plays a major role in protein secretion by helping the post-translocational extracellular folding of several secreted proteins. Important for the secretion of the protective antigen. The three PsrA proteins in this organism show different but overlapping substrate specificities. The protein is Foldase protein PrsA 2 (prsA2) of Bacillus anthracis.